Consider the following 205-residue polypeptide: Holliday junction branch migration complex subunit RuvA (205 aa).

The segment at 1–64 (MIGRLRGTLA…EDAHLLYGFA (64 aa)) is domain I. Residues 65–143 (EKRERELFRE…AWETSPAMFT (79 aa)) are domain II. Positions 144-154 (LVSDGPLPVAS) are flexible linker. Residues 154–205 (SESSAEADAVSALVSLGYKPQEASKAIAAIKDKAGLSSEELIRRSLKGMISK) form a domain III region.

The protein belongs to the RuvA family. Homotetramer. Forms an RuvA(8)-RuvB(12)-Holliday junction (HJ) complex. HJ DNA is sandwiched between 2 RuvA tetramers; dsDNA enters through RuvA and exits via RuvB. An RuvB hexamer assembles on each DNA strand where it exits the tetramer. Each RuvB hexamer is contacted by two RuvA subunits (via domain III) on 2 adjacent RuvB subunits; this complex drives branch migration. In the full resolvosome a probable DNA-RuvA(4)-RuvB(12)-RuvC(2) complex forms which resolves the HJ.

It is found in the cytoplasm. In terms of biological role, the RuvA-RuvB-RuvC complex processes Holliday junction (HJ) DNA during genetic recombination and DNA repair, while the RuvA-RuvB complex plays an important role in the rescue of blocked DNA replication forks via replication fork reversal (RFR). RuvA specifically binds to HJ cruciform DNA, conferring on it an open structure. The RuvB hexamer acts as an ATP-dependent pump, pulling dsDNA into and through the RuvAB complex. HJ branch migration allows RuvC to scan DNA until it finds its consensus sequence, where it cleaves and resolves the cruciform DNA. The polypeptide is Holliday junction branch migration complex subunit RuvA (Pseudomonas putida (strain ATCC 47054 / DSM 6125 / CFBP 8728 / NCIMB 11950 / KT2440)).